The sequence spans 206 residues: Large ribosomal subunit protein uL4 (206 aa).

The segment at Q45–S78 is disordered. A compositionally biased stretch (basic residues) spans H58 to G70.

It belongs to the universal ribosomal protein uL4 family. Part of the 50S ribosomal subunit.

In terms of biological role, one of the primary rRNA binding proteins, this protein initially binds near the 5'-end of the 23S rRNA. It is important during the early stages of 50S assembly. It makes multiple contacts with different domains of the 23S rRNA in the assembled 50S subunit and ribosome. Functionally, forms part of the polypeptide exit tunnel. The sequence is that of Large ribosomal subunit protein uL4 from Burkholderia ambifaria (strain MC40-6).